The primary structure comprises 331 residues: Histone-lysine N-methyltransferase, H3 lysine-9 specific dim-5 (331 aa).

Positions V77 to G159 constitute a Pre-SET domain. 9 residues coordinate Zn(2+): C79, C81, C87, C92, C94, C141, C145, C147, and C151. An SET domain is found at V162–V297. S-adenosyl-L-methionine contacts are provided by residues R172 to W174, D215, Y217, R251, and N254 to H255. The Zn(2+) site is built by C257, C319, C321, and C326. One can recognise a Post-SET domain in the interval E315 to W331.

The protein belongs to the class V-like SAM-binding methyltransferase superfamily. Histone-lysine methyltransferase family. Suvar3-9 subfamily.

The protein resides in the nucleus. The protein localises to the chromosome. The catalysed reaction is L-lysyl(9)-[histone H3] + 3 S-adenosyl-L-methionine = N(6),N(6),N(6)-trimethyl-L-lysyl(9)-[histone H3] + 3 S-adenosyl-L-homocysteine + 3 H(+). Histone methyltransferase that specifically trimethylates histone H3 to form H3K9me3. H3K9me3 marks chromatin regions for DNA methylation. Dim-5 recognizes Arg-8 to Gly-12 of the H3 tail with Thr-11 and Gly-12 being the most important specificity determinants, the recognition of whcih is important to distinguish H3K9 from H3K27 and H4K20. This chain is Histone-lysine N-methyltransferase, H3 lysine-9 specific dim-5 (dim-5), found in Neurospora crassa (strain ATCC 24698 / 74-OR23-1A / CBS 708.71 / DSM 1257 / FGSC 987).